We begin with the raw amino-acid sequence, 142 residues long: Dromaiocalcin-1 (142 aa).

3 disulfides stabilise this stretch: Cys13–Cys24, Cys41–Cys138, and Cys113–Cys130. Residues 20-139 (FRGNCYGYFR…CGERNAFICK (120 aa)) form the C-type lectin domain.

The protein localises to the secreted. It localises to the extracellular space. It is found in the extracellular matrix. The sequence is that of Dromaiocalcin-1 from Dromaius novaehollandiae (Emu).